The following is a 431-amino-acid chain: Serine--tRNA ligase (431 aa).

L-serine is bound at residue T235 to E237. Residues R266–E268 and V282 contribute to the ATP site. E289 is a binding site for L-serine. Residue E353 to S356 coordinates ATP. An L-serine-binding site is contributed by S389.

Belongs to the class-II aminoacyl-tRNA synthetase family. Type-1 seryl-tRNA synthetase subfamily. Homodimer. The tRNA molecule binds across the dimer.

It localises to the cytoplasm. It catalyses the reaction tRNA(Ser) + L-serine + ATP = L-seryl-tRNA(Ser) + AMP + diphosphate + H(+). It carries out the reaction tRNA(Sec) + L-serine + ATP = L-seryl-tRNA(Sec) + AMP + diphosphate + H(+). It functions in the pathway aminoacyl-tRNA biosynthesis; selenocysteinyl-tRNA(Sec) biosynthesis; L-seryl-tRNA(Sec) from L-serine and tRNA(Sec): step 1/1. Its function is as follows. Catalyzes the attachment of serine to tRNA(Ser). Is also able to aminoacylate tRNA(Sec) with serine, to form the misacylated tRNA L-seryl-tRNA(Sec), which will be further converted into selenocysteinyl-tRNA(Sec). The protein is Serine--tRNA ligase of Prosthecochloris aestuarii (strain DSM 271 / SK 413).